The following is a 248-amino-acid chain: tRNA (guanine-N(1)-)-methyltransferase (248 aa).

S-adenosyl-L-methionine-binding positions include G116 and 136-141 (VGDYVL).

This sequence belongs to the RNA methyltransferase TrmD family. As to quaternary structure, homodimer.

The protein localises to the cytoplasm. It catalyses the reaction guanosine(37) in tRNA + S-adenosyl-L-methionine = N(1)-methylguanosine(37) in tRNA + S-adenosyl-L-homocysteine + H(+). Functionally, specifically methylates guanosine-37 in various tRNAs. This Psychromonas ingrahamii (strain DSM 17664 / CCUG 51855 / 37) protein is tRNA (guanine-N(1)-)-methyltransferase.